A 403-amino-acid polypeptide reads, in one-letter code: Formin-like protein 21b (403 aa).

In terms of domain architecture, FH2 spans 1 to 380 (MELLFTATLL…KAAKEAEMEK (380 aa)). A disordered region spans residues 373 to 403 (AKEAEMEKTKKRVSLTNKKASGVGEEESCLI).

Belongs to the formin-like family. Class-II subfamily.

The chain is Formin-like protein 21b (FH21B) from Arabidopsis thaliana (Mouse-ear cress).